We begin with the raw amino-acid sequence, 436 residues long: GTPase Der (436 aa).

EngA-type G domains lie at 3–168 (PLIA…PESD) and 177–352 (IRLA…DNRA). Residues 9 to 16 (GRPNVGKS), 56 to 60 (DTGGY), 120 to 123 (NKVE), 183 to 190 (GRPNVGKS), 230 to 234 (DTAGL), and 295 to 298 (NKWD) each bind GTP. The KH-like domain occupies 353–436 (RKISTSALNR…VTISLRFLQK (84 aa)).

It belongs to the TRAFAC class TrmE-Era-EngA-EngB-Septin-like GTPase superfamily. EngA (Der) GTPase family. In terms of assembly, associates with the 50S ribosomal subunit.

GTPase that plays an essential role in the late steps of ribosome biogenesis. The protein is GTPase Der of Chlorobium phaeovibrioides (strain DSM 265 / 1930) (Prosthecochloris vibrioformis (strain DSM 265)).